A 423-amino-acid polypeptide reads, in one-letter code: Replication factor C large subunit (423 aa).

An ATP-binding site is contributed by 63-70 (GPPGIGKT).

Belongs to the activator 1 small subunits family. RfcL subfamily. As to quaternary structure, heteromultimer composed of small subunits (RfcS) and large subunits (RfcL).

Part of the RFC clamp loader complex which loads the PCNA sliding clamp onto DNA. This Pyrobaculum islandicum (strain DSM 4184 / JCM 9189 / GEO3) protein is Replication factor C large subunit.